The chain runs to 271 residues: Insulin-like growth factor-binding protein 5 (271 aa).

The N-terminal stretch at 1–19 (MVLTAVLLLLAACAGPAQG) is a signal peptide. Residues 22–102 (SFVHCEPCDE…LHGRGVCLNE (81 aa)) form the IGFBP N-terminal domain. 6 disulfide bridges follow: Cys26–Cys52, Cys29–Cys54, Cys37–Cys55, Cys44–Cys58, Cys66–Cys79, and Cys73–Cys99. A compositionally biased stretch (basic and acidic residues) spans 109–121 (AKIERDSREHEEP). Residues 109-129 (AKIERDSREHEEPTTSEMAEE) are disordered. Position 115 is a phosphoserine (Ser115). The 75-residue stretch at 188-262 (QGPCRRHMEA…MEYVDGDFQC (75 aa)) folds into the Thyroglobulin type-1 domain. 3 cysteine pairs are disulfide-bonded: Cys191–Cys218, Cys229–Cys240, and Cys242–Cys262.

As to quaternary structure, interacts with IGF1; this interaction enhances the growth stimulatory effects of IGF1 on fibroblasts. Interacts with CAV1; this interaction allows trafficking of IGFBP5 from the plasma membrane to the nucleus. Interacts with NCL; this interaction is necessary for IGFBP5 localization to the nucleus.

Its subcellular location is the secreted. The protein resides in the cytoplasm. The protein localises to the nucleus. Functionally, multifunctional protein that plays a critical role in regulating the availability of IGFs to their receptors and thereby regulates IGF-mediated cellular processes including proliferation, differentiation, and apoptosis in a cell-type specific manner. Increases the cell proliferation of osteoblasts, intestinal smooth muscle cells and neuroblastoma cells. Enhances adhesion and survival of epithelial cells but decreases adhesion of mesenchymal cells. Once secreted, acts as a major mediator of mTORC1-dependent feedback inhibition of IGF1 signaling. Also plays a role in the induction of extracellular matrix (ECM) production and deposition independently of its nuclear translocation and binding to IGFs. Acts itself as a growth factor that can act independently of IGFs to regulate bone formation. Acts as a ligand for the ROR1 receptor which triggers formation of ROR1/HER2 heterodimer to enhance CREB oncogenic signaling. The chain is Insulin-like growth factor-binding protein 5 (IGFBP5) from Sus scrofa (Pig).